The following is a 588-amino-acid chain: Proteasome-associated ATPase (588 aa).

The span at methionine 1–arginine 10 shows a compositional bias: basic and acidic residues. A disordered region spans residues methionine 1 to alanine 22. The stretch at arginine 47–proline 94 forms a coiled coil. Glycine 276–leucine 281 contacts ATP. The tract at residues tyrosine 587–leucine 588 is docks into pockets in the proteasome alpha-ring.

This sequence belongs to the AAA ATPase family. As to quaternary structure, homohexamer. Assembles into a hexameric ring structure that caps the 20S proteasome core. Strongly interacts with the prokaryotic ubiquitin-like protein Pup through a hydrophobic interface; the interacting region of ARC lies in its N-terminal coiled-coil domain. There is one Pup binding site per ARC hexamer ring. Upon ATP-binding, the C-terminus of ARC interacts with the alpha-rings of the proteasome core, possibly by binding to the intersubunit pockets.

It functions in the pathway protein degradation; proteasomal Pup-dependent pathway. In terms of biological role, ATPase which is responsible for recognizing, binding, unfolding and translocation of pupylated proteins into the bacterial 20S proteasome core particle. May be essential for opening the gate of the 20S proteasome via an interaction with its C-terminus, thereby allowing substrate entry and access to the site of proteolysis. Thus, the C-termini of the proteasomal ATPase may function like a 'key in a lock' to induce gate opening and therefore regulate proteolysis. The protein is Proteasome-associated ATPase of Streptomyces griseus subsp. griseus (strain JCM 4626 / CBS 651.72 / NBRC 13350 / KCC S-0626 / ISP 5235).